Here is a 396-residue protein sequence, read N- to C-terminus: Flavohemoprotein (396 aa).

The 136-residue stretch at methionine 1–aspartate 136 folds into the Globin domain. Residue histidine 85 coordinates heme b. Catalysis depends on charge relay system residues tyrosine 95 and glutamate 135. Positions glycine 147 to valine 396 are reductase. An FAD-binding FR-type domain is found at serine 150 to aspartate 255. FAD contacts are provided by residues tyrosine 188 and arginine 204–serine 207. Glycine 268 to proline 273 provides a ligand contact to NADP(+). Position 389–392 (cysteine 389–proline 392) interacts with FAD.

The protein belongs to the globin family. Two-domain flavohemoproteins subfamily. In the C-terminal section; belongs to the flavoprotein pyridine nucleotide cytochrome reductase family. Requires heme b as cofactor. FAD is required as a cofactor.

The enzyme catalyses 2 nitric oxide + NADPH + 2 O2 = 2 nitrate + NADP(+) + H(+). It catalyses the reaction 2 nitric oxide + NADH + 2 O2 = 2 nitrate + NAD(+) + H(+). Its function is as follows. Is involved in NO detoxification in an aerobic process, termed nitric oxide dioxygenase (NOD) reaction that utilizes O(2) and NAD(P)H to convert NO to nitrate, which protects the bacterium from various noxious nitrogen compounds. Therefore, plays a central role in the inducible response to nitrosative stress. The sequence is that of Flavohemoprotein from Pectobacterium atrosepticum (strain SCRI 1043 / ATCC BAA-672) (Erwinia carotovora subsp. atroseptica).